The primary structure comprises 509 residues: 2,3-bisphosphoglycerate-independent phosphoglycerate mutase (509 aa).

Mn(2+)-binding residues include Asp-14 and Ser-64. Ser-64 serves as the catalytic Phosphoserine intermediate. Residues His-125, 155 to 156 (RD), Arg-187, Arg-193, 259 to 262 (RADR), and Lys-332 contribute to the substrate site. Residues Asp-399, His-403, Asp-440, His-441, and His-459 each coordinate Mn(2+).

Belongs to the BPG-independent phosphoglycerate mutase family. Monomer. Mn(2+) is required as a cofactor.

It carries out the reaction (2R)-2-phosphoglycerate = (2R)-3-phosphoglycerate. It participates in carbohydrate degradation; glycolysis; pyruvate from D-glyceraldehyde 3-phosphate: step 3/5. In terms of biological role, catalyzes the interconversion of 2-phosphoglycerate and 3-phosphoglycerate. The chain is 2,3-bisphosphoglycerate-independent phosphoglycerate mutase from Psychromonas ingrahamii (strain DSM 17664 / CCUG 51855 / 37).